The chain runs to 1107 residues: Rho GTPase-activating protein 39 (1107 aa).

The segment at 1-21 (MSQAQDYECRSHHVDEQEPRI) is disordered. Position 2 is an N-acetylserine (Ser2). A compositionally biased stretch (basic and acidic residues) spans 7-19 (YECRSHHVDEQEP). 2 WW domains span residues 25 to 58 (STRLEWVEIIEPRTRERMYANLVTGECVWDPPAG) and 63 to 97 (RTSEDQWWELFDPNTSRFYYYSAASQRTVWHRPQN). The segment covering 111 to 122 (QNTESPRASADN) has biased composition (polar residues). 4 disordered regions span residues 111–173 (QNTE…PPGV), 218–267 (PSFL…PERR), 282–311 (SPLLIQPRKPSSDSQPSSPRYGYEPPLYEE), and 326–370 (MDVQ…LMRT). Residues 123 to 136 (SPGRGSRDGSTGSS) are compositionally biased toward low complexity. Polar residues predominate over residues 242 to 254 (SGSQHSPNLQTFV). Ser282 is subject to Phosphoserine. Polar residues-rich tracts occupy residues 331–343 (EANSPYQTGSPQR) and 353–369 (LQTTKQTPTSPCQQLMR). Phosphoserine occurs at positions 380, 384, 402, and 403. Disordered regions lie at residues 404-429 (PKLRAGPRHKYAPNPGGGTYSLQPSP), 441-529 (SGDY…RASL), and 563-585 (MKQRGSWDSQQDGSGYESDGAVP). Residues 470–484 (SWSSQQDTMSSTGYS) show a composition bias toward polar residues. Ser597, Ser683, Ser708, and Ser719 each carry phosphoserine. The MyTH4 domain occupies 715-867 (WSSESIKKPM…PYVEEPDGVA (153 aa)). One can recognise a Rho-GAP domain in the interval 914–1102 (SALQEVMSMQ…VLIQHLDTSF (189 aa)).

The protein resides in the nucleus. The polypeptide is Rho GTPase-activating protein 39 (Arhgap39) (Mus musculus (Mouse)).